Here is a 585-residue protein sequence, read N- to C-terminus: SCF E3 ubiquitin ligase complex F-box protein grrA (585 aa).

Residues 1–10 are compositionally biased toward polar residues; sequence MARSRQPTRF. 2 disordered regions span residues 1–34 and 41–60; these read MARSRQPTRFSSEAPSESSSSTSPERAADDDTDF and DSQSSIGAGNPRDSHIQNDP. Over residues 11–25 the composition is skewed to low complexity; that stretch reads SSEAPSESSSSTSPE. Positions 65–113 constitute an F-box domain; the sequence is PPIAYLPPEILISIFSKLSSPRDLLSCLLVCRIWALNCVGLLWHRPSCN. 13 LRR repeats span residues 147-171, 172-197, 198-223, 224-249, 250-275, 276-301, 302-329, 330-355, 356-381, 382-407, 408-432, 433-465, and 466-491; these read TEDVSDGTVVPFSQCNRIERLTLTN, CRKLTDIGVSDLVVGSRHLQALDVSE, LRSLTDHTLFKVAENCNRLQGLNITG, CVKVTDDSLIAVSQNCRLLKRLKLNG, VSQVTDKAILSFAQNCPSILEIDLQE, CKLVTNQSVTALMTTLQNLRELRLAH, CTEIDDSAFLDLPRHIQMTSLRILDLTA, CENIRDEAVERIVSSAPRLRNLVLAK, CKFITDRAVWAICKLGKNLHYVHLGH, CSNINDSAVIQLVKSCNRIRYIDLAC, CSRLTDRSVQQLATLPKLRRIGLVK, CQLITDASILALARPAQDHSVPCSSLERVHLSY, and CVNLTMVGIHALLNSCPRLTHLSLTG.

Part of a SCF E3 ubiquitin ligase complex. As to expression, specifically expressed in ascus mother cells.

The protein resides in the cytoplasm. In terms of biological role, involved in meiosis and required for ascospore formation. Involved in substrate recognition in ubiquitin-dependent degradation. This chain is SCF E3 ubiquitin ligase complex F-box protein grrA (grrA), found in Emericella nidulans (strain FGSC A4 / ATCC 38163 / CBS 112.46 / NRRL 194 / M139) (Aspergillus nidulans).